The primary structure comprises 206 residues: LexA repressor (206 aa).

A DNA-binding region (H-T-H motif) is located at residues 28–48 (RAEIARRLGFKSANAAEEHLK). Residues serine 123 and lysine 160 each act as for autocatalytic cleavage activity in the active site.

Belongs to the peptidase S24 family. Homodimer.

The catalysed reaction is Hydrolysis of Ala-|-Gly bond in repressor LexA.. In terms of biological role, represses a number of genes involved in the response to DNA damage (SOS response), including recA and lexA. In the presence of single-stranded DNA, RecA interacts with LexA causing an autocatalytic cleavage which disrupts the DNA-binding part of LexA, leading to derepression of the SOS regulon and eventually DNA repair. This is LexA repressor from Shewanella pealeana (strain ATCC 700345 / ANG-SQ1).